Consider the following 29-residue polypeptide: Bacteriocin (29 aa).

It is found in the secreted. Has antibacterial activity against strains of L.monocytogenes, L.lactis, B.subtilis, S.typhi, S.aureus, C.perfringens, E.aerogenes and M.luteus but not against E.coli, S.sonnei, S.pneumoniae, S.faecalis, P.aeruginosa, K.pneumoniae or P.vulgaris. The protein is Bacteriocin of Lactococcus lactis subsp. lactis (Streptococcus lactis).